Reading from the N-terminus, the 363-residue chain is Phosphoserine aminotransferase (363 aa).

Arginine 41 serves as a coordination point for L-glutamate. Pyridoxal 5'-phosphate is bound by residues 75–76 (AS), tryptophan 100, threonine 155, aspartate 175, and glutamine 198. Residue lysine 199 is modified to N6-(pyridoxal phosphate)lysine. 239–240 (NT) is a binding site for pyridoxal 5'-phosphate.

It belongs to the class-V pyridoxal-phosphate-dependent aminotransferase family. SerC subfamily. As to quaternary structure, homodimer. Pyridoxal 5'-phosphate is required as a cofactor.

The protein localises to the cytoplasm. It catalyses the reaction O-phospho-L-serine + 2-oxoglutarate = 3-phosphooxypyruvate + L-glutamate. The enzyme catalyses 4-(phosphooxy)-L-threonine + 2-oxoglutarate = (R)-3-hydroxy-2-oxo-4-phosphooxybutanoate + L-glutamate. It participates in amino-acid biosynthesis; L-serine biosynthesis; L-serine from 3-phospho-D-glycerate: step 2/3. In terms of biological role, catalyzes the reversible conversion of 3-phosphohydroxypyruvate to phosphoserine and of 3-hydroxy-2-oxo-4-phosphonooxybutanoate to phosphohydroxythreonine. This chain is Phosphoserine aminotransferase, found in Streptococcus agalactiae serotype III (strain NEM316).